Consider the following 196-residue polypeptide: Phosphate-specific transport system accessory protein PhoU homolog (196 aa).

The protein belongs to the PhoU family. Homodimer.

The protein resides in the cytoplasm. Functionally, plays a role in the regulation of phosphate uptake. This is Phosphate-specific transport system accessory protein PhoU homolog from Archaeoglobus fulgidus (strain ATCC 49558 / DSM 4304 / JCM 9628 / NBRC 100126 / VC-16).